A 201-amino-acid polypeptide reads, in one-letter code: Recombination protein RecR (201 aa).

The C4-type zinc-finger motif lies at 60 to 75; it reads CATCGNFDTVQPCAVC. In terms of domain architecture, Toprim spans 83–178; it reads GIICVVEDVP…DVTRLAHGVP (96 aa).

The protein belongs to the RecR family.

Its function is as follows. May play a role in DNA repair. It seems to be involved in an RecBC-independent recombinational process of DNA repair. It may act with RecF and RecO. The polypeptide is Recombination protein RecR (Hyphomonas neptunium (strain ATCC 15444)).